The following is a 168-amino-acid chain: MKEKISEKEYKALIRKIGKEHFDGEKEEYGDGTVGVWTYELRKYKLKPPVKVKYVTQEQFQEYKDSNNQRLIKIETTLAAQGEQIRIQVEQIKELQIEQKAQGETLKLILQTLQKMSDRLDKMEVKMDKMEEKMDKMEGKIDKIENRMDKMEVKMDKMEKRIDKLESK.

Belongs to the UPF0134 family.

This Mycoplasma pneumoniae (strain ATCC 29342 / M129 / Subtype 1) (Mycoplasmoides pneumoniae) protein is UPF0134 protein MPN_524.